Consider the following 796-residue polypeptide: MAWDMCNQDSVWSDIECAALVGEDQPLCPDLPELDLSELDVNDLDTDSFLGGLKWCSDQSEIISNQYNNEPSNIFEKIDEENEANLLAVLTETLDSLPVDEDGLPSFDALTDGDVTTENEASPSSMPDGTPPPQEAEEPSLLKKLLLAPANTQLSYNECSGLSTQNHANHNHRIRTNPAVVKTENSWSNKAKSICQQQKPQRRPCSELLKYLTTNDDPPHTKPTENRNSSRDKCTSKKKAHTQSQTQHLQAKPTTLSLPLTPESPNDPKGSPFENKTIERTLSVELSGTAGLTPPTTPPHKANQDNPFRASPKLKPSCKTVVPPPSKKARYSESSCTQGSNSTKKGPEQSELYAQLSKTSVLTSGHEERKAKRPSLRLFGDHDYCQSINSKTEILVSTSQELHDSRQLENKDAPSSNGPGQIHSSTDSDPCYLRETAEVSRQVSPGSTRKQLQDQEIRAELNKHFGHPSQAVFDDKADKTSELRDSDFSNEQFSKLPMFINSGLAMDGLFDDSEDESDKLNSPWDGTQSYSLFDVSPSCSSFNSPCRDSVSPPKSLFSQRPQRMRSRSRSFSRHRSCSRSPYSRSRSRSPGSRSSSRSCYYYESGHCRHRTHRNSPLCASRSRSPHSRRPRYDSYEEYQHERLKREEYRREYEKRESERAKQRERQRQKAIEERRVIYVGKIRPDTTRTELRDRFEVFGEIEECTVNLRDDGDSYGFITYRYTCDAFAALENGYTLRRSNETDFELYFCGRKQFFKSNYADLDSNSDDFDPACIKSKYDSLDFDSLLKEAQRSLRR.

At K77 the chain carries N6-acetyllysine. The tract at residues 98 to 138 (PVDEDGLPSFDALTDGDVTTENEASPSSMPDGTPPPQEAEE) is disordered. A compositionally biased stretch (polar residues) spans 114–127 (DVTTENEASPSSMP). Residues 142–146 (LKKLL) carry the LXXLL motif motif. N6-acetyllysine is present on K144. T176 carries the phosphothreonine; by AMPK modification. K182 carries the post-translational modification N6-acetyllysine. The segment at 211 to 275 (YLTTNDDPPH…NDPKGSPFEN (65 aa)) is disordered. Positions 217–235 (DPPHTKPTENRNSSRDKCT) are enriched in basic and acidic residues. Residues 242-258 (TQSQTQHLQAKPTTLSL) are compositionally biased toward polar residues. K252, K269, K276, and K319 each carry N6-acetyllysine. Disordered stretches follow at residues 288–374 (GTAG…AKRP) and 398–452 (TSQE…RKQL). The interaction with PPARG stretch occupies residues 291–337 (GLTPPTTPPHKANQDNPFRASPKLKPSCKTVVPPPSKKARYSESSCT). The span at 332-344 (SESSCTQGSNSTK) shows a compositional bias: polar residues. N6-acetyllysine is present on residues K345 and K411. Residues 348 to 796 (EQSELYAQLS…LKEAQRSLRR (449 aa)) are mediates interaction with RNF34. Over residues 401 to 412 (ELHDSRQLENKD) the composition is skewed to basic and acidic residues. Composition is skewed to polar residues over residues 413-428 (APSS…STDS) and 439-450 (VSRQVSPGSTRK). At K450 the chain carries N6-acetyllysine. S538 is subject to Phosphoserine; by AMPK. Disordered stretches follow at residues 542–597 (FNSP…SSSR), 609–637 (HRTH…SYEE), and 648–667 (YRRE…ERQR). A compositionally biased stretch (basic residues) spans 562–577 (QRMRSRSRSFSRHRSC). Positions 578–597 (SRSPYSRSRSRSPGSRSSSR) are enriched in low complexity. Residues 675-751 (RVIYVGKIRP…TDFELYFCGR (77 aa)) enclose the RRM domain. N6-acetyllysine is present on residues K756 and K777.

In terms of assembly, homooligomer. Interacts with MYBBP1A; inhibits MYBBP1A transcriptional activation. Interacts with PRDM16, LPIN1 and PML. Interacts (via LXXLL motif) with RORA and RORC (via AF-2 motif); activates RORA and RORC transcriptional activation. Interacts with LRPPRC. Interacts with FOXO1. Interacts with NR5A2. Phosphorylation by AMPK in skeletal muscle increases activation of its own promoter. Phosphorylated by CLK2. In terms of processing, heavily acetylated by KAT2A/GCN5 under conditions of high nutrients, leading to inactivation of PPARGC1A. Deacetylated by SIRT1 in low nutrients/high NAD conditions, leading to its activation. Post-translationally, ubiquitinated. Ubiquitination by RNF34 induces proteasomal degradation.

It localises to the nucleus. Its subcellular location is the PML body. In terms of biological role, transcriptional coactivator for steroid receptors and nuclear receptors. Greatly increases the transcriptional activity of PPARG and thyroid hormone receptor on the uncoupling protein promoter. Can regulate key mitochondrial genes that contribute to the program of adaptive thermogenesis. Plays an essential role in metabolic reprogramming in response to dietary availability through coordination of the expression of a wide array of genes involved in glucose and fatty acid metabolism. Acts as a key regulator of gluconeogenesis: stimulates hepatic gluconeogenesis by increasing the expression of gluconeogenic enzymes, and acting together with FOXO1 to promote the fasting gluconeogenic program. Induces the expression of PERM1 in the skeletal muscle in an ESRRA-dependent manner. Also involved in the integration of the circadian rhythms and energy metabolism. Required for oscillatory expression of clock genes, such as BMAL1 and NR1D1, through the coactivation of RORA and RORC, and metabolic genes, such as PDK4 and PEPCK. The sequence is that of Peroxisome proliferator-activated receptor gamma coactivator 1-alpha (PPARGC1A) from Bos taurus (Bovine).